A 131-amino-acid polypeptide reads, in one-letter code: UPF0102 protein YraN (131 aa).

Residues 1-19 show a composition bias toward polar residues; that stretch reads MATVPTRSGSPRQLTTKQT. A disordered region spans residues 1 to 21; it reads MATVPTRSGSPRQLTTKQTGD.

Belongs to the UPF0102 family.

In Escherichia coli O7:K1 (strain IAI39 / ExPEC), this protein is UPF0102 protein YraN.